The following is a 204-amino-acid chain: Recombination protein RecR (204 aa).

The segment at 61–76 adopts a C4-type zinc-finger fold; sequence CARCNTFSETQICSTC. In terms of domain architecture, Toprim spans 84-183; that stretch reads SLLCIVETPA…KVTRIARGIP (100 aa).

The protein belongs to the RecR family.

Its function is as follows. May play a role in DNA repair. It seems to be involved in an RecBC-independent recombinational process of DNA repair. It may act with RecF and RecO. The protein is Recombination protein RecR of Polynucleobacter asymbioticus (strain DSM 18221 / CIP 109841 / QLW-P1DMWA-1) (Polynucleobacter necessarius subsp. asymbioticus).